Consider the following 199-residue polypeptide: Ribonuclease P protein subunit p25 (199 aa).

The segment covering 1-11 (MENFRKVRSEE) has biased composition (basic and acidic residues). Disordered stretches follow at residues 1–28 (MENFRKVRSEEAPAGCGAEGGGPGSGPF) and 144–199 (LDPR…DQTA). A compositionally biased stretch (pro residues) spans 151–166 (YQPPNPHPGPSSPPAA). 2 positions are modified to phosphoserine: Ser-172 and Ser-182.

This sequence belongs to the histone-like Alba family. In terms of assembly, component of nuclear RNase P and RNase MRP ribonucleoproteins. RNase P consists of a catalytic RNA moiety and 10 different protein chains; POP1, POP4, POP5, POP7, RPP14, RPP21, RPP25, RPP30, RPP38 and RPP40. Within the RNase P complex, POP1, POP7 and RPP25 form the 'finger' subcomplex, POP5, RPP14, RPP40 and homodimeric RPP30 form the 'palm' subcomplex, and RPP21, POP4 and RPP38 form the 'wrist' subcomplex. All subunits of the RNase P complex interact with the catalytic RNA. Several subunits of RNase P are also part of the RNase MRP complex. RNase MRP consists of a catalytic RNA moiety and about 8 protein subunits; POP1, POP7, RPP25, RPP30, RPP38, RPP40 and possibly also POP4 and POP5. POP7 forms a heterodimer with RPP25 that binds to the P3 stem loop of the catalytic RNA.

Its subcellular location is the nucleus. The protein localises to the nucleolus. In terms of biological role, component of ribonuclease P, a ribonucleoprotein complex that generates mature tRNA molecules by cleaving their 5'-ends. Also a component of the MRP ribonuclease complex, which cleaves pre-rRNA sequences. This Homo sapiens (Human) protein is Ribonuclease P protein subunit p25 (RPP25).